The following is a 401-amino-acid chain: MARPDLHERISSLRKLRVAQERVRVRRQVGRRDGVRLEIDGRWLTGFCSNDYLGLSQQFEVVAALQDAAARDGAGATASHLICGHHTAHETLERDIAEWLGYPSALLFGSGFIANLAVQQALLSEEDDVCVQDRLNHASLLDATRLAGCRLRRYPHLDVEGAMRQLKGAPEGAAMLASDGVFSMDGDVAPLRALSLVARMQEALFYVDDAHGVGVLGPQGRGCVADAGLGVAEVPLQLVTLGKALGGYGAVVVGEEALIRHLAETARPYIYTTALPPAQVAATLAAVRLARRDDWRRTRLTELIGTFRDGARRHGFELMASDTPIQPLLCGEEPTVMAMSAALEQAGFMVGAIRPPTVPEGKARLRVTLSALHTPQQVQALVDAIVQARDVVSRQPQRALA.

Position 24 (R24) interacts with substrate. 111–112 contributes to the pyridoxal 5'-phosphate binding site; it reads GF. H137 lines the substrate pocket. Pyridoxal 5'-phosphate is bound by residues S183, H211, and T240. Residue K243 is modified to N6-(pyridoxal phosphate)lysine. T357 provides a ligand contact to substrate.

It belongs to the class-II pyridoxal-phosphate-dependent aminotransferase family. BioF subfamily. Homodimer. It depends on pyridoxal 5'-phosphate as a cofactor.

The enzyme catalyses 6-carboxyhexanoyl-[ACP] + L-alanine + H(+) = (8S)-8-amino-7-oxononanoate + holo-[ACP] + CO2. It participates in cofactor biosynthesis; biotin biosynthesis. In terms of biological role, catalyzes the decarboxylative condensation of pimeloyl-[acyl-carrier protein] and L-alanine to produce 8-amino-7-oxononanoate (AON), [acyl-carrier protein], and carbon dioxide. The chain is 8-amino-7-oxononanoate synthase from Xanthomonas campestris pv. campestris (strain 8004).